The sequence spans 299 residues: ATP phosphoribosyltransferase (299 aa).

This sequence belongs to the ATP phosphoribosyltransferase family. Long subfamily. Mg(2+) serves as cofactor.

The protein localises to the cytoplasm. It carries out the reaction 1-(5-phospho-beta-D-ribosyl)-ATP + diphosphate = 5-phospho-alpha-D-ribose 1-diphosphate + ATP. The protein operates within amino-acid biosynthesis; L-histidine biosynthesis; L-histidine from 5-phospho-alpha-D-ribose 1-diphosphate: step 1/9. With respect to regulation, feedback inhibited by histidine. Catalyzes the condensation of ATP and 5-phosphoribose 1-diphosphate to form N'-(5'-phosphoribosyl)-ATP (PR-ATP). Has a crucial role in the pathway because the rate of histidine biosynthesis seems to be controlled primarily by regulation of HisG enzymatic activity. The protein is ATP phosphoribosyltransferase of Campylobacter lari (strain RM2100 / D67 / ATCC BAA-1060).